Reading from the N-terminus, the 269-residue chain is C-type lectin domain family 1 member A (269 aa).

The Cytoplasmic segment spans residues 1–51 (MQAKYSSTRDMLDDDDTTISLYSGTSTVTRRAEPRHSENGTPSSVWRPVAL). The chain crosses the membrane as a helical; Signal-anchor for type II membrane protein span at residues 52 to 72 (TLLTLCLVLLVGLAALGLVFF). Topologically, residues 73-269 (QFYQLSNIQQ…AGRVVPGELQ (197 aa)) are extracellular. N-linked (GlcNAc...) asparagine glycosylation is found at asparagine 94, asparagine 126, asparagine 168, and asparagine 202. Residues 143–257 (YGDKCYQFYK…CKELRRCACE (115 aa)) form the C-type lectin domain. 2 disulfides stabilise this stretch: cysteine 164-cysteine 256 and cysteine 235-cysteine 248.

Its subcellular location is the membrane. This chain is C-type lectin domain family 1 member A (Clec1a), found in Mus musculus (Mouse).